Here is a 377-residue protein sequence, read N- to C-terminus: RCC1 domain-containing protein 1 (377 aa).

The interaction with KDM8 stretch occupies residues 1–172; it reads MAEKRHGAWF…VRQLELGAEH (172 aa). One copy of the RCC1 1 repeat lies at 6–57; sequence HGAWFGFGFCGFGQALGSGNSHHSVYSPEPLHASDDICQVSAGWSYTALVTR. R144 is modified ((3R)-3-hydroxyarginine). RCC1 repeat units follow at residues 179–230, 232–289, and 319–372; these read AGQV…CLSE, GDIY…IAIQ, and TGEL…VYAM.

Found in a complex with KDM8. Interacts (via N-terminus) with KDM8 (via N-terminus). Post-translationally, specifically hydroxylated (with R stereochemistry) at C-3 of ARG-141 by KDM8.

The protein localises to the chromosome. Plays a role in transcriptional repression of satellite repeats, possibly by regulating H3K36 methylation levels in centromeric regions together with KDM8. Possibly together with KDM8, is involved in proper mitotic spindle organization and chromosome segregation. Plays a role in regulating alpha-tubulin deacetylation and cytoskeletal microtubule stability, thereby promoting cell migration and TGF-beta-induced epithelial to mesenchymal transition (EMT), potentially through the inhibition of KDM8. This chain is RCC1 domain-containing protein 1 (Rccd1), found in Mus musculus (Mouse).